A 742-amino-acid chain; its full sequence is MSLLLEPSAAMIKEQKLYREMGLTDEEFARIEAILGRLPNYTETGIFAVMWSEHCSYKNSKPVLKKFPTDGPHVLQGPGEGAGIVDIGDGLAVAFKIESHNHPSAIEPYQGAATGVGGIIRDVFSMGARPIALLNSLRFGELTSPRVKYLFEQVVAGIAGYGNCVGIPTVGGEVQFDPAYEGNPLVNAMCVGIIRHEDIQRGVATGVGNTVMYVGAKTGRDGIHGATFASEELSEQSEAKRPAVQVGDPFMEKLLLEACLEAVKSDALVGIQDMGAAGLTSSSAEMASKGGFGIEMNLDLVPQREAGMTPYEMMLSESQERMLLVVKQGCEDEIAAIFAKYGLEAKAIGKVTDDKMLRLLFRGEVAAEIPVDALAKDAPVYHKPSAEPAYYREFQAMPPYTPHIEDYNQTLLGLLAQPTIASKEWVYDQYDYMVRTNTVVAPGSDAAVVRIRGMNKALALTTDCNSRYLYLDPETGGKIAVAEAARNVICSGAKPLAITDCLNFGSPEKPEIFWQLEKAVDGMSEACRALGTPVVSGNVSLYNETNGEAVYPTPVVGMVGLIDDLSHITTQSFKQAGDLIYVIGEAKPEFGGSELQKWLEGRIFGKAPEIDLEVEASRQRQLLAAIRAGVVASAHDIAEGGLAVALAECVMGASGLGAKVTIGGDLVSELFSETQSRFVISVKKEHQEAFEQLVEAKRIGEVTGDGILTVNGEQGETVIRLSVDEMRNVWKGAIPCLLKSKD.

His-54 is a catalytic residue. Residues Tyr-57 and Lys-96 each contribute to the ATP site. Glu-98 is a binding site for Mg(2+). Substrate is bound by residues 99–102 (SHNH) and Arg-121. The active-site Proton acceptor is the His-100. Asp-122 lines the Mg(2+) pocket. Gln-245 serves as a coordination point for substrate. Position 273 (Asp-273) interacts with Mg(2+). 317–319 (ESQ) contributes to the substrate binding site. Residues Asp-500 and Gly-537 each contribute to the ATP site. Asn-538 contacts Mg(2+). Substrate is bound at residue Ser-540.

Belongs to the FGAMS family. As to quaternary structure, monomer. Part of the FGAM synthase complex composed of 1 PurL, 1 PurQ and 2 PurS subunits.

The protein resides in the cytoplasm. The catalysed reaction is N(2)-formyl-N(1)-(5-phospho-beta-D-ribosyl)glycinamide + L-glutamine + ATP + H2O = 2-formamido-N(1)-(5-O-phospho-beta-D-ribosyl)acetamidine + L-glutamate + ADP + phosphate + H(+). It functions in the pathway purine metabolism; IMP biosynthesis via de novo pathway; 5-amino-1-(5-phospho-D-ribosyl)imidazole from N(2)-formyl-N(1)-(5-phospho-D-ribosyl)glycinamide: step 1/2. In terms of biological role, part of the phosphoribosylformylglycinamidine synthase complex involved in the purines biosynthetic pathway. Catalyzes the ATP-dependent conversion of formylglycinamide ribonucleotide (FGAR) and glutamine to yield formylglycinamidine ribonucleotide (FGAM) and glutamate. The FGAM synthase complex is composed of three subunits. PurQ produces an ammonia molecule by converting glutamine to glutamate. PurL transfers the ammonia molecule to FGAR to form FGAM in an ATP-dependent manner. PurS interacts with PurQ and PurL and is thought to assist in the transfer of the ammonia molecule from PurQ to PurL. The sequence is that of Phosphoribosylformylglycinamidine synthase subunit PurL from Geobacillus kaustophilus (strain HTA426).